Reading from the N-terminus, the 555-residue chain is CTP synthase (555 aa).

The segment at 1-265 is amidoligase domain; the sequence is MTRYIFITGG…GNRVCEKLNI (265 aa). Residue S13 coordinates CTP. S13 serves as a coordination point for UTP. ATP is bound by residues 14-19 and D71; that span reads SLGKGI. Mg(2+) is bound by residues D71 and E139. CTP contacts are provided by residues 146–148, 186–191, and K222; these read DIE and KTKPTQ. UTP contacts are provided by residues 186-191 and K222; that span reads KTKPTQ. The Glutamine amidotransferase type-1 domain maps to 290 to 541; sequence TVAVVGKYVD…IKAGLAAKEA (252 aa). Residue G351 participates in L-glutamine binding. Residue C378 is the Nucleophile; for glutamine hydrolysis of the active site. Residues 379–382, E402, and R469 each bind L-glutamine; that span reads LGMQ. Active-site residues include H514 and E516.

Belongs to the CTP synthase family. As to quaternary structure, homotetramer.

It carries out the reaction UTP + L-glutamine + ATP + H2O = CTP + L-glutamate + ADP + phosphate + 2 H(+). The enzyme catalyses L-glutamine + H2O = L-glutamate + NH4(+). The catalysed reaction is UTP + NH4(+) + ATP = CTP + ADP + phosphate + 2 H(+). Its pathway is pyrimidine metabolism; CTP biosynthesis via de novo pathway; CTP from UDP: step 2/2. Its activity is regulated as follows. Allosterically activated by GTP, when glutamine is the substrate; GTP has no effect on the reaction when ammonia is the substrate. The allosteric effector GTP functions by stabilizing the protein conformation that binds the tetrahedral intermediate(s) formed during glutamine hydrolysis. Inhibited by the product CTP, via allosteric rather than competitive inhibition. Catalyzes the ATP-dependent amination of UTP to CTP with either L-glutamine or ammonia as the source of nitrogen. Regulates intracellular CTP levels through interactions with the four ribonucleotide triphosphates. This Coxiella burnetii (strain CbuK_Q154) (Coxiella burnetii (strain Q154)) protein is CTP synthase.